Reading from the N-terminus, the 359-residue chain is Protein HEXIM1 (359 aa).

The tract at residues 1-163 (MAEPFLSEYQ…RRRPSKKKRH (163 aa)) is disordered. The segment covering 9-19 (YQHQPQTSNCT) has biased composition (polar residues). Composition is skewed to basic and acidic residues over residues 34–47 (PGAEERVPEEDSRW) and 84–93 (CLREGEKGQN). Phosphoserine occurs at positions 97 and 98. Residues 148-163 (LGKKKHRRRPSKKKRH) show a composition bias toward basic residues. The interval 150-177 (KKKHRRRPSKKKRHWKPYYKLTWEEKKK) is basic region; mediates nuclear localization and interaction with 7SK snRNA and NR3C1. An interaction with P-TEFb region spans residues 202–205 (PYNT). Residues 210 to 250 (MDDHDQEEPDLKTGLYSKRAAAKSDDTSDDDFMEEGGEEDG) form an autoinhibitory acidic region; in absence of 7SK snRNA interacts with the basic region preventing interaction with P-TEFb and modulating subcellular localization region. Positions 213–262 (HDQEEPDLKTGLYSKRAAAKSDDTSDDDFMEEGGEEDGGSDGMGGDGSEF) are disordered. S233 carries the post-translational modification Phosphoserine. T236 carries the post-translational modification Phosphothreonine. Acidic residues predominate over residues 236-251 (TSDDDFMEEGGEEDGG). Phosphoserine occurs at positions 237, 252, and 260. Residues 283–349 (SKQELIKEYL…LTENELHRQQ (67 aa)) are a coiled coil. The interval 286 to 314 (ELIKEYLELEKCLSRMEDENNRLRLESKR) is mediates interaction with CCNT1. The segment at 310 to 355 (LESKRLGGDDARVRELELELDRLRAENLQLLTENELHRQQERAPLS) is required for inhibition of ESR1-dependent transcription.

The protein belongs to the HEXIM family. Homooligomer and heterooligomer with HEXIM2; probably dimeric. Core component of the 7SK RNP complex, at least composed of 7SK RNA, LARP7, MEPCE, HEXIM1 (or HEXIM2) and P-TEFb (composed of CDK9 and CCNT1/cyclin-T1). Interacts with the N-CoR complex through NCOR1. Interacts with ESR1 and NR3C1. May interact with NF-kappa-B through RELA. Interacts with CCNT2; mediates formation of a tripartite complex with KPNA2. Part of the HDP-RNP complex composed of at least HEXIM1, PRKDC, XRCC5, XRCC6, paraspeckle proteins (SFPQ, NONO, PSPC1, RBM14, and MATR3) and NEAT1 non-coding RNA. In terms of tissue distribution, ubiquitously expressed with higher expression in placenta. HEXIM1 and HEXIM2 are differentially expressed. Expressed in endocrine tissues.

The protein resides in the nucleus. Its subcellular location is the cytoplasm. Functionally, transcriptional regulator which functions as a general RNA polymerase II transcription inhibitor. Core component of the 7SK RNP complex: in cooperation with 7SK snRNA sequesters P-TEFb in a large inactive 7SK snRNP complex preventing RNA polymerase II phosphorylation and subsequent transcriptional elongation. May also regulate NF-kappa-B, ESR1, NR3C1 and CIITA-dependent transcriptional activity. Plays a role in the regulation of DNA virus-mediated innate immune response by assembling into the HDP-RNP complex, a complex that serves as a platform for IRF3 phosphorylation and subsequent innate immune response activation through the cGAS-STING pathway. This Homo sapiens (Human) protein is Protein HEXIM1 (HEXIM1).